Consider the following 190-residue polypeptide: Ubiquinol-cytochrome c reductase iron-sulfur subunit (190 aa).

The helical transmembrane segment at 18 to 39 (FLYYATAGAGTVAAGAAAWTLV) threads the bilayer. Positions 95–188 (GQLIDRSAQN…AEFLDDTTIK (94 aa)) constitute a Rieske domain. 4 residues coordinate [2Fe-2S] cluster: Cys132, His134, Cys152, and His155. Cys137 and Cys154 form a disulfide bridge.

This sequence belongs to the Rieske iron-sulfur protein family. As to quaternary structure, the main subunits of complex b-c1 are: cytochrome b, cytochrome c1 and the Rieske protein. [2Fe-2S] cluster is required as a cofactor.

The protein localises to the cell membrane. The catalysed reaction is a quinol + 2 Fe(III)-[cytochrome c](out) = a quinone + 2 Fe(II)-[cytochrome c](out) + 2 H(+)(out). Its function is as follows. Component of the ubiquinol-cytochrome c reductase complex (complex III or cytochrome b-c1 complex), which is a respiratory chain that generates an electrochemical potential coupled to ATP synthesis. In Paracoccus denitrificans, this protein is Ubiquinol-cytochrome c reductase iron-sulfur subunit (petA).